Here is a 300-residue protein sequence, read N- to C-terminus: Bifunctional protein FolD (300 aa).

Residues 168 to 170, Ser-193, and Ile-234 each bind NADP(+); that span reads GRS.

The protein belongs to the tetrahydrofolate dehydrogenase/cyclohydrolase family. Homodimer.

The enzyme catalyses (6R)-5,10-methylene-5,6,7,8-tetrahydrofolate + NADP(+) = (6R)-5,10-methenyltetrahydrofolate + NADPH. It catalyses the reaction (6R)-5,10-methenyltetrahydrofolate + H2O = (6R)-10-formyltetrahydrofolate + H(+). It participates in one-carbon metabolism; tetrahydrofolate interconversion. In terms of biological role, catalyzes the oxidation of 5,10-methylenetetrahydrofolate to 5,10-methenyltetrahydrofolate and then the hydrolysis of 5,10-methenyltetrahydrofolate to 10-formyltetrahydrofolate. The sequence is that of Bifunctional protein FolD from Ehrlichia ruminantium (strain Welgevonden).